Here is an 883-residue protein sequence, read N- to C-terminus: MQSYIAVNIDMASLKMLICVCVAILIPSTLSQDSHGIGWNNSPHDTASMDVGKISFSEAIGSGAPKEPQIRNRIFACSSPTGASVARLAQPRHCHRHADSTNMTEGIAVVFKQNIAPYVFNVTLYYKHITTVTTWALFSRPQITNEYVTRVPIDYHEIVRIDRSGECSSKATYHKNFMFFEAYDNDEAEKKLPLVPSLLRSTVSKAFHTTNFTKRHQTLGYRTSTSVDCVVEYLQARSVYPYDYFGMATGDTVEISPFYTKNTTGPRRHSVYRDYRFLEIANYQVRDLETGQIRPPKKRNFLTDEQFTIGWDAMEEKESVCTLSKWIEVPEAVRVSYKNSYHFSLKDMTMTFSSGKQPFNISRLHLAECVPTIASEAIDGIFARKYSSTHVRSGDIEYYLGSGGFLIAFQKLMSHGLAEMYLEEAQRQNHLPRGRERRQAAGRRTASLQSGPQGDRITTHSSATFAMLQFAYDKIQAHVNELIGNLLEAWCELQNRQLIVWHEMKKLNPNSLMTSLFGQPVSARLLGDIVAVSKCIEIPIENIRMQDSMRVPGDPTMCYTRPVLIFRYSSSPESQFSANSTENHNLGILGQLGEHNEILQGRNLIEPCMINHRRYFLLGENYLLYEDYTFVRQVNASEIEEVSTFINLNATILEDLDFVPVEVYTREELRDTGTLNYDDVVRYQNIYNKRFRDIDTVIRGDRGDAIFRAIADFFGNTLGEVGKALGTVVMTAAAAVISTVSGIASFLSNPFAALAIGIAVVVSIILGLLAFKYVMNLKSNPVQVLFPGAVPPAGTPPRPSRRYYKDEEEVEEDSDEDDRILATRVLKGLELLHKDEQKARRQKARFSAFAKNMRNLFRRKPRTKEDDYPLLEYPSWAEESEDE.

Residues 1 to 31 (MQSYIAVNIDMASLKMLICVCVAILIPSTLS) form the signal peptide. Residues 32-750 (QDSHGIGWNN…SGIASFLSNP (719 aa)) lie on the Virion surface side of the membrane. Cystine bridges form between C77–C535, C94–C491, C167–C229, C321–C369, and C558–C608. N102 and N121 each carry an N-linked (GlcNAc...) asparagine; by host glycan. Residues 134–140 (TWALFSR) are involved in fusion and/or binding to host membrane. The N-linked (GlcNAc...) asparagine; by host glycan is linked to N211. The involved in fusion and/or binding to host membrane stretch occupies residues 216-223 (HQTLGYRT). N262 and N360 each carry an N-linked (GlcNAc...) asparagine; by host glycan. The tract at residues 428–457 (QNHLPRGRERRQAAGRRTASLQSGPQGDRI) is disordered. 3 N-linked (GlcNAc...) asparagine; by host glycosylation sites follow: N579, N635, and N649. 2 hydrophobic membrane proximal region regions span residues 694–748 (IDTV…SFLS) and 724–744 (ALGTVVMTAAAAVISTVSGIA). The helical transmembrane segment at 751–771 (FAALAIGIAVVVSIILGLLAF) threads the bilayer. The Intravirion segment spans residues 772-883 (KYVMNLKSNP…PSWAEESEDE (112 aa)). The tract at residues 791–817 (PPAGTPPRPSRRYYKDEEEVEEDSDED) is disordered. Acidic residues predominate over residues 806 to 817 (DEEEVEEDSDED). The Internalization motif motif lies at 868–871 (YPLL).

Belongs to the herpesviridae glycoprotein B family. Homotrimer; disulfide-linked. Binds to heparan sulfate proteoglycans. Interacts with gH/gL heterodimer. A proteolytic cleavage by host furin generates two subunits that remain linked by disulfide bonds.

Its subcellular location is the virion membrane. The protein resides in the host cell membrane. It is found in the host endosome membrane. The protein localises to the host Golgi apparatus membrane. Its function is as follows. Envelope glycoprotein that forms spikes at the surface of virion envelope. Essential for the initial attachment to heparan sulfate moieties of the host cell surface proteoglycans. Involved in fusion of viral and cellular membranes leading to virus entry into the host cell. Following initial binding to its host receptors, membrane fusion is mediated by the fusion machinery composed at least of gB and the heterodimer gH/gL. May be involved in the fusion between the virion envelope and the outer nuclear membrane during virion egress. This is Envelope glycoprotein B from Infectious laryngotracheitis virus (strain SA-2) (ILTV).